We begin with the raw amino-acid sequence, 385 residues long: Multidrug resistance protein MdtE (385 aa).

Positions 1–20 are cleaved as a signal peptide; the sequence is MNRRRKLLIPLLFCGAMLTA. Cys21 carries N-palmitoyl cysteine lipidation. Cys21 carries S-diacylglycerol cysteine lipidation.

The protein belongs to the membrane fusion protein (MFP) (TC 8.A.1) family. As to quaternary structure, homotrimer. Part of the tripartite efflux system MdtEF-TolC, which is composed of an inner membrane transporter, MdtF, a membrane fusion protein, MdtE, and an outer membrane component, TolC. The complex forms a large protein conduit and can translocate molecules across both the inner and outer membranes.

It localises to the cell inner membrane. Its function is as follows. Part of the tripartite efflux system MdtEF-TolC, which confers resistance to compounds such as rhodamine 6G, erythromycin, doxorubicin, ethidium bromide, TPP, SDS, deoxycholate, crystal violet and benzalkonium. In Escherichia coli (strain K12), this protein is Multidrug resistance protein MdtE (mdtE).